A 133-amino-acid chain; its full sequence is Profilin-2 (133 aa).

Cysteines 13 and 117 form a disulfide. Residues 83–99 (AVIRGKKGSGGITIKKT) carry the Involved in PIP2 interaction motif. A Phosphothreonine modification is found at Thr-113.

The protein belongs to the profilin family. As to quaternary structure, occurs in many kinds of cells as a complex with monomeric actin in a 1:1 ratio. Post-translationally, phosphorylated by MAP kinases.

The protein localises to the cytoplasm. It is found in the cytoskeleton. Functionally, binds to actin and affects the structure of the cytoskeleton. At high concentrations, profilin prevents the polymerization of actin, whereas it enhances it at low concentrations. This chain is Profilin-2, found in Betula pendula (European white birch).